Consider the following 639-residue polypeptide: Threonine--tRNA ligase (639 aa).

The region spanning 1–61 (MIKVALKDGS…DTDCDLNLFK (61 aa)) is the TGS domain. The catalytic stretch occupies residues 242–532 (DHRKLGKELG…LIEHYAGKFP (291 aa)). Positions 333, 384, and 509 each coordinate Zn(2+).

This sequence belongs to the class-II aminoacyl-tRNA synthetase family. Homodimer. The cofactor is Zn(2+).

It localises to the cytoplasm. The enzyme catalyses tRNA(Thr) + L-threonine + ATP = L-threonyl-tRNA(Thr) + AMP + diphosphate + H(+). Catalyzes the attachment of threonine to tRNA(Thr) in a two-step reaction: L-threonine is first activated by ATP to form Thr-AMP and then transferred to the acceptor end of tRNA(Thr). Also edits incorrectly charged L-seryl-tRNA(Thr). This is Threonine--tRNA ligase from Clostridioides difficile (strain 630) (Peptoclostridium difficile).